We begin with the raw amino-acid sequence, 535 residues long: Probable inorganic phosphate transporter 1-7 (535 aa).

Topologically, residues Met-1–Ala-24 are cytoplasmic. A helical membrane pass occupies residues Ile-25 to Val-45. Residues Thr-46–Ser-70 are Extracellular-facing. A helical transmembrane segment spans residues Ala-71–Leu-91. Topologically, residues Gly-92–Lys-99 are cytoplasmic. The chain crosses the membrane as a helical span at residues Val-100–Gly-120. At Ser-121 to Cys-131 the chain is on the extracellular side. A helical transmembrane segment spans residues Phe-132 to Met-152. Over Ser-153–Arg-161 the chain is Cytoplasmic. The chain crosses the membrane as a helical span at residues Gly-162 to Phe-182. Residues Ala-183 to Ala-211 lie on the Extracellular side of the membrane. The helical transmembrane segment at Asp-212–Ser-232 threads the bilayer. Residues Arg-233 to Arg-289 lie on the Cytoplasmic side of the membrane. The helical transmembrane segment at His-290–Ser-310 threads the bilayer. Over Gln-311 to Thr-345 the chain is Extracellular. A helical transmembrane segment spans residues Leu-346–Ile-366. Residues Gly-367 to Arg-368 lie on the Cytoplasmic side of the membrane. A helical membrane pass occupies residues Phe-369–Pro-389. Over Tyr-390–Arg-399 the chain is Extracellular. The helical transmembrane segment at Ile-400–Thr-420 threads the bilayer. The Cytoplasmic segment spans residues Thr-421–His-438. A helical membrane pass occupies residues Gly-439–Leu-459. At Ala-460–Asn-480 the chain is on the extracellular side. Residues Ser-481–Glu-501 traverse the membrane as a helical segment. Residues Ser-502–Ala-535 are Cytoplasmic-facing. Positions Ser-506 to Ala-535 are disordered. Positions Glu-519–Ala-535 are enriched in low complexity. Position 520 is a phosphoserine (Ser-520).

It belongs to the major facilitator superfamily. Phosphate:H(+) symporter (TC 2.A.1.9) family. Mature pollen.

The protein localises to the membrane. Its function is as follows. High-affinity transporter for external inorganic phosphate. The chain is Probable inorganic phosphate transporter 1-7 (PHT1-7) from Arabidopsis thaliana (Mouse-ear cress).